Here is a 223-residue protein sequence, read N- to C-terminus: MAIFASAGAAPVITIDGPTASGKGTIAHRVAKQLGWDVLDSGALYRLTALAALRRGLPATDEPAVAAVAQALDVRFDGPHVYLEGRDAGHEIRQEEVGNYASRIAAYPGVRQALLERQRAFRQPPGLVADGRDMGAVVFPDASLKIFLVADVEARAQRRCKQLIEKGISANLDDLLRDMRERDARDTQRAVAPLAPAADAHVLDSSGLTIEQTVQAVLDFWCA.

17-25 contributes to the ATP binding site; sequence GPTASGKGT.

This sequence belongs to the cytidylate kinase family. Type 1 subfamily.

It is found in the cytoplasm. The enzyme catalyses CMP + ATP = CDP + ADP. The catalysed reaction is dCMP + ATP = dCDP + ADP. The chain is Cytidylate kinase from Bordetella pertussis (strain Tohama I / ATCC BAA-589 / NCTC 13251).